Here is a 379-residue protein sequence, read N- to C-terminus: Adenylosuccinate synthetase (379 aa).

Residues 11–17 and 39–41 contribute to the GTP site; these read GDEGKGK and GHT. Residue D12 is the Proton acceptor of the active site. 2 residues coordinate Mg(2+): D12 and G39. IMP is bound by residues 12 to 15, 37 to 40, T127, R141, Q223, T238, and R302; these read DEGK and NAGH. Catalysis depends on H40, which acts as the Proton donor. Position 298–304 (298–304) interacts with substrate; the sequence is TTTGRGR. GTP-binding positions include R304 and 330-332; that span reads KLD.

This sequence belongs to the adenylosuccinate synthetase family. In terms of assembly, homodimer. The cofactor is Mg(2+).

Its subcellular location is the cytoplasm. It catalyses the reaction IMP + L-aspartate + GTP = N(6)-(1,2-dicarboxyethyl)-AMP + GDP + phosphate + 2 H(+). Its pathway is purine metabolism; AMP biosynthesis via de novo pathway; AMP from IMP: step 1/2. Its function is as follows. Plays an important role in the de novo pathway of purine nucleotide biosynthesis. Catalyzes the first committed step in the biosynthesis of AMP from IMP. This Methanosarcina mazei (strain ATCC BAA-159 / DSM 3647 / Goe1 / Go1 / JCM 11833 / OCM 88) (Methanosarcina frisia) protein is Adenylosuccinate synthetase.